The sequence spans 780 residues: Endonuclease MutS2 (780 aa).

Residue 334–341 (GPNAGGKT) coordinates ATP. A Smr domain is found at 706–780 (IDIRGMRSVD…GGSGKTIVEI (75 aa)).

This sequence belongs to the DNA mismatch repair MutS family. MutS2 subfamily. As to quaternary structure, homodimer. Binds to stalled ribosomes, contacting rRNA.

In terms of biological role, endonuclease that is involved in the suppression of homologous recombination and thus may have a key role in the control of bacterial genetic diversity. Acts as a ribosome collision sensor, splitting the ribosome into its 2 subunits. Detects stalled/collided 70S ribosomes which it binds and splits by an ATP-hydrolysis driven conformational change. Acts upstream of the ribosome quality control system (RQC), a ribosome-associated complex that mediates the extraction of incompletely synthesized nascent chains from stalled ribosomes and their subsequent degradation. Probably generates substrates for RQC. This is Endonuclease MutS2 from Borreliella burgdorferi (strain ATCC 35210 / DSM 4680 / CIP 102532 / B31) (Borrelia burgdorferi).